We begin with the raw amino-acid sequence, 640 residues long: Epithelial sodium channel subunit beta (640 aa).

Over 1-50 (MHVKKYLLKGLHRLQKGPGYTYKELLVWYCDNTNTHGPKRIICEGPKKKA) the chain is Cytoplasmic. Residues 51–71 (MWFLLTLLFAALVCWQWGIFI) form a helical membrane-spanning segment. Residues 72-532 (RTYLSWEVSV…GGQFGFWMGG (461 aa)) lie on the Extracellular side of the membrane. 9 cysteine pairs are disulfide-bonded: Cys98/Cys272, Cys184/Cys189, Cys196/Cys203, Cys249/Cys256, Cys361/Cys448, Cys386/Cys444, Cys390/Cys440, Cys399/Cys426, and Cys401/Cys415. Asn260 carries N-linked (GlcNAc...) asparagine glycosylation. Residues 533–553 (SVLCLIEFGEIIIDFVWITII) traverse the membrane as a helical segment. The Cytoplasmic segment spans residues 554–640 (KLVALAKSLR…IESDSEGDAI (87 aa)). A disordered region spans residues 590 to 640 (FQPDTAPRSPNTGPYPSEQALPIPGTPPPNYDSLRLQPLDVIESDSEGDAI). The short motif at 616 to 620 (PPPNY) is the PY motif; recruits WW domain-containing proteins and is thereby required for ubiquitination and inhibition of the channel by NEDD4 and NEDD4L element. Over residues 631 to 640 (IESDSEGDAI) the composition is skewed to acidic residues. Ser633 and Ser635 each carry phosphoserine.

Belongs to the amiloride-sensitive sodium channel (TC 1.A.6) family. SCNN1B subfamily. In terms of assembly, component of the heterotrimeric epithelial sodium channel (ENaC) composed of an alpha/SCNN1A, a beta/SCNN1B and a gamma/SCNN1G subunit. An additional delta/SCNN1D subunit can replace the alpha/SCNN1A subunit to form an alternative channel with specific properties. Interacts with WWP1 (via WW domains). Interacts with WWP2 (via WW domains); inhibits the channel. Interacts with the full-length immature form of PCSK9 (pro-PCSK9); inhibits ENaC by promoting its proteasomal degradation. Interacts (N-glycosylated) with BPIFA1; the interaction is direct and inhibits the proteolytic processing of SCNN1A and SCNN1G and the activation of ENaC. Post-translationally, ubiquitinated. Can be ubiquitinated at multiple sites and undergo monoubiquitination and polyubiquitination. Ubiquitination by NEDD4 or NEDD4L inhibits the ENaC channel through endocytosis, intracellular retention and degradation of its individual subunits. However, some studies could not confirm the ubiquitination of this subunit of the ENaC. In terms of processing, phosphorylated on serine and threonine residues. Aldosterone and insulin increase the basal level of phosphorylation. N-glycosylated. N-glycosylation is required for interaction with BPIFA1. Detected in placenta, lung and kidney. Expressed in kidney (at protein level).

The protein localises to the apical cell membrane. Its subcellular location is the cytoplasmic vesicle membrane. It carries out the reaction Na(+)(in) = Na(+)(out). Its activity is regulated as follows. Originally identified and characterized by its inhibition by the diuretic drug amiloride. Functionally, this is one of the three pore-forming subunits of the heterotrimeric epithelial sodium channel (ENaC), a critical regulator of sodium balance and fluid homeostasis. ENaC operates in epithelial tissues, where it mediates the electrodiffusion of sodium ions from extracellular fluid through the apical membrane of cells, with water following osmotically. It plays a key role in maintaining sodium homeostasis through electrogenic sodium reabsorption in the kidneys. Additionally, ENaC is essential for airway surface liquid homeostasis, which is crucial for proper mucus clearance. The polypeptide is Epithelial sodium channel subunit beta (Homo sapiens (Human)).